Reading from the N-terminus, the 161-residue chain is UPF0262 protein Rru_A2770 (161 aa).

The protein belongs to the UPF0262 family.

The polypeptide is UPF0262 protein Rru_A2770 (Rhodospirillum rubrum (strain ATCC 11170 / ATH 1.1.1 / DSM 467 / LMG 4362 / NCIMB 8255 / S1)).